Reading from the N-terminus, the 563-residue chain is Lipase 2 (563 aa).

The first 19 residues, 1–19 (MVSKSLFLAAAVNLAGVLA), serve as a signal peptide directing secretion. Q20 bears the Pyrrolidone carboxylic acid mark. C80 and C124 are oxidised to a cystine. S236 serves as the catalytic Acyl-ester intermediate. The cysteines at positions 295 and 307 are disulfide-linked. N302 is a glycosylation site (N-linked (GlcNAc...) asparagine). E373 acts as the Charge relay system in catalysis. N-linked (GlcNAc...) asparagine glycosylation is present at N383. Catalysis depends on H482, which acts as the Charge relay system.

This sequence belongs to the type-B carboxylesterase/lipase family. In terms of assembly, monomer.

The protein resides in the secreted. It catalyses the reaction a triacylglycerol + H2O = a diacylglycerol + a fatty acid + H(+). Functionally, hydrolyzes all ester bonds in triglyceride and displays a high affinity for triolein. For unsaturated substrates having long fatty acyl chains (C18:2 cis-9, cis-12 and C18:3 cis-9, cis-12, cis-15) GCL I shows higher specific activity than GCL II, whereas GCL II shows higher specific activity against saturated substrates having short fatty acid chains (C8, C10, C12 and C14). In Geotrichum candidum (Oospora lactis), this protein is Lipase 2 (LIP2).